The chain runs to 339 residues: DNA-directed RNA polymerase subunit alpha (339 aa).

Residues 1–233 (MVREEVAGST…DLFLPFLHAE (233 aa)) are alpha N-terminal domain (alpha-NTD). Positions 266 to 339 (GIPLNCIFID…IDLLKNKLSF (74 aa)) are alpha C-terminal domain (alpha-CTD).

The protein belongs to the RNA polymerase alpha chain family. In terms of assembly, in plastids the minimal PEP RNA polymerase catalytic core is composed of four subunits: alpha, beta, beta', and beta''. When a (nuclear-encoded) sigma factor is associated with the core the holoenzyme is formed, which can initiate transcription.

It is found in the plastid. It localises to the chloroplast. The catalysed reaction is RNA(n) + a ribonucleoside 5'-triphosphate = RNA(n+1) + diphosphate. In terms of biological role, DNA-dependent RNA polymerase catalyzes the transcription of DNA into RNA using the four ribonucleoside triphosphates as substrates. The protein is DNA-directed RNA polymerase subunit alpha of Psathyrostachys juncea (Russian wildrye).